The chain runs to 85 residues: Conotoxin Cap15b (85 aa).

The signal sequence occupies residues 1–23; sequence MEKLTFLILVATVLLTIHVLVQS. Positions 24–49 are excised as a propeptide; sequence DGDKHLKRRPKQYATKRLSALMRGHR. Glutamine 50 is modified (pyrrolidone carboxylic acid).

It belongs to the conotoxin O2 superfamily. Post-translationally, contains 4 disulfide bonds. Expressed by the venom duct.

Its subcellular location is the secreted. The chain is Conotoxin Cap15b from Conus capitaneus (Captain cone).